Consider the following 276-residue polypeptide: Rhomboid protease GlpG (276 aa).

6 helical membrane passes run 94–114 (GPVT…MSLI), 142–162 (IFMH…WYLG), 169–189 (LGSG…GYVQ), 192–212 (FSGP…GYVW), 229–249 (LIIF…GMSM), and 250–270 (ANGA…VDTL). The active-site Nucleophile is the Ser-201. Residue His-254 is part of the active site.

The protein belongs to the peptidase S54 family.

The protein resides in the cell inner membrane. The catalysed reaction is Cleaves type-1 transmembrane domains using a catalytic dyad composed of serine and histidine that are contributed by different transmembrane domains.. Functionally, rhomboid-type serine protease that catalyzes intramembrane proteolysis. The protein is Rhomboid protease GlpG of Salmonella agona (strain SL483).